Reading from the N-terminus, the 344-residue chain is Heme A synthase (344 aa).

9 helical membrane-spanning segments follow: residues 20–40 (IAWW…VGGL), 104–124 (RFLG…FVVT), 135–155 (LIFL…MVMS), 170–190 (AHLG…LDLL), 205–225 (AAAI…VAGI), 233–253 (TWPL…TPVW), 265–285 (FQHR…WWAA), 296–316 (WLAV…LWVV), and 317–337 (PIPL…VAVW). His267 contributes to the heme binding site. A heme-binding site is contributed by His324.

The protein belongs to the COX15/CtaA family. Type 2 subfamily. As to quaternary structure, interacts with CtaB. Heme b is required as a cofactor.

It is found in the cell membrane. It catalyses the reaction Fe(II)-heme o + 2 A + H2O = Fe(II)-heme a + 2 AH2. Its pathway is porphyrin-containing compound metabolism; heme A biosynthesis; heme A from heme O: step 1/1. Functionally, catalyzes the conversion of heme O to heme A by two successive hydroxylations of the methyl group at C8. The first hydroxylation forms heme I, the second hydroxylation results in an unstable dihydroxymethyl group, which spontaneously dehydrates, resulting in the formyl group of heme A. This Parvibaculum lavamentivorans (strain DS-1 / DSM 13023 / NCIMB 13966) protein is Heme A synthase.